A 251-amino-acid polypeptide reads, in one-letter code: 16S rRNA (guanine(1405)-N(7))-methyltransferase (251 aa).

S-adenosyl-L-methionine contacts are provided by residues Y56, 81–83 (HAS), R87, A111, D131, 157–158 (DV), F173, and E182.

It belongs to the methyltransferase superfamily. Aminoglycoside resistance family.

The enzyme catalyses guanosine(1405) in 16S rRNA + S-adenosyl-L-methionine = N(7)-methylguanosine(1405) in 16S rRNA + S-adenosyl-L-homocysteine. In terms of biological role, specifically methylates the N(7) position of guanine 1405 in 16S rRNA. Confers resistance to various aminoglycosides, including kanamycin, tobramycin, amikacin, arbekacin, gentamicin, sisomicin and isepamicin. This is 16S rRNA (guanine(1405)-N(7))-methyltransferase (rmtB) from Serratia marcescens.